Reading from the N-terminus, the 90-residue chain is Cell division topological specificity factor (90 aa).

A disordered region spans residues 1–21 (MAGFWSKIFGNDEKPSSAQTA). Over residues 10–21 (GNDEKPSSAQTA) the composition is skewed to basic and acidic residues.

It belongs to the MinE family.

In terms of biological role, prevents the cell division inhibition by proteins MinC and MinD at internal division sites while permitting inhibition at polar sites. This ensures cell division at the proper site by restricting the formation of a division septum at the midpoint of the long axis of the cell. The protein is Cell division topological specificity factor of Acinetobacter baylyi (strain ATCC 33305 / BD413 / ADP1).